The primary structure comprises 286 residues: Protein Bride of doubletime (286 aa).

Interacts with dco (via nuclear localization signal). Interacts with Ankrd49; interaction promotes the stability of both complex members.

It is found in the cytoplasm. Its subcellular location is the cytosol. The protein resides in the cell membrane. In terms of biological role, functions in planar polarity establishment and circadian rhythms by promoting the activity and localization of dco/dbt. Required for regulating the levels of dco/dbt and per in the nuclei of photoreceptor cells and thereby is involved in normal oscillations of the circadian clock proteins in the eye. In the dark, the cry circadian and rhodopsin visual pathways, activate the accumulation of the protein into Arr1- and Arr2-dependent cytosolic foci which are required for dco localization to photoreceptor nuclei. It is possible that the accumulation into foci results in the dissociation of the protein from dco, thus allowing dco to interact with importins and microtubles for nuclear transport. By promoting nuclei localization and kinase activity of dco towards per, it is essential for regulating normal cycles of per nuclear accumulation in brain circadian neurons and thus is important for normal circadian behavior. Essential for regulating the establishment of planar cell polarity in the wing. Forms a complex with Ankrd49 which likely functions in the regulation of planar polarity by promoting the activity of dco during planar polarity establishment. Within the complex, directly promotes dco activity in regulating phosphorylation and asymmetric localization of core planar polarity proteins such as dsh. The polypeptide is Protein Bride of doubletime (Drosophila melanogaster (Fruit fly)).